The following is a 294-amino-acid chain: Pantothenate synthetase 3 (294 aa).

31–38 contributes to the ATP binding site; that stretch reads MGALHEGH. H38 functions as the Proton donor in the catalytic mechanism. Q62 lines the (R)-pantoate pocket. Q62 is a beta-alanine binding site. 154–157 is an ATP binding site; sequence GEKD. Residue Q160 coordinates (R)-pantoate. 191–194 serves as a coordination point for ATP; it reads LSSR.

It belongs to the pantothenate synthetase family. As to quaternary structure, homodimer.

The protein resides in the cytoplasm. It catalyses the reaction (R)-pantoate + beta-alanine + ATP = (R)-pantothenate + AMP + diphosphate + H(+). It functions in the pathway cofactor biosynthesis; (R)-pantothenate biosynthesis; (R)-pantothenate from (R)-pantoate and beta-alanine: step 1/1. Functionally, catalyzes the condensation of pantoate with beta-alanine in an ATP-dependent reaction via a pantoyl-adenylate intermediate. The sequence is that of Pantothenate synthetase 3 from Frankia alni (strain DSM 45986 / CECT 9034 / ACN14a).